The following is a 206-amino-acid chain: Large ribosomal subunit protein uL4 (206 aa).

Positions 66 to 77 are enriched in basic residues; that stretch reads QKGTGRARHHSA. A disordered region spans residues 66–96; sequence QKGTGRARHHSARAPQFRGGGQAHGPVVRSH.

The protein belongs to the universal ribosomal protein uL4 family. In terms of assembly, part of the 50S ribosomal subunit.

One of the primary rRNA binding proteins, this protein initially binds near the 5'-end of the 23S rRNA. It is important during the early stages of 50S assembly. It makes multiple contacts with different domains of the 23S rRNA in the assembled 50S subunit and ribosome. Its function is as follows. Forms part of the polypeptide exit tunnel. This chain is Large ribosomal subunit protein uL4, found in Brucella anthropi (strain ATCC 49188 / DSM 6882 / CCUG 24695 / JCM 21032 / LMG 3331 / NBRC 15819 / NCTC 12168 / Alc 37) (Ochrobactrum anthropi).